The primary structure comprises 332 residues: SLAM family member 6 (332 aa).

A signal peptide spans 1–21 (MLWLFQSLLFVFCFGPGNVVS). Over 22–226 (QSSLTPLMVN…VKIQYTDTKM (205 aa)) the chain is Extracellular. The 86-residue stretch at 35-120 (GESVTLPLEF…ISTKTSAKLS (86 aa)) folds into the Ig-like V-type domain. N-linked (GlcNAc...) asparagine glycans are attached at residues Asn58, Asn87, Asn137, Asn144, Asn161, Asn178, and Asn203. Residues 132-209 (NIQVTNHSQL…AVSNLSFSVS (78 aa)) form the Ig-like C2-type domain. Cystine bridges form between Cys147–Cys214 and Cys153–Cys195. Residues 227-247 (ILFMVSGICIVFGFIILLLLV) traverse the membrane as a helical segment. The Cytoplasmic portion of the chain corresponds to 248–331 (LRKRRDSLSL…FSRATALDNV (84 aa)). Tyr274 is modified (phosphotyrosine). Ser278 is subject to Phosphoserine. 2 short sequence motifs (ITSM) span residues 283-288 (TVYASV) and 307-312 (TIYSTI). Residue Tyr309 is modified to Phosphotyrosine.

In terms of assembly, homodimer. Interacts with PTN6. Interacts (phosphorylated) with PTN11. Interacts (phosphorylated on tyrosine residues) with SH2D1A/SAP and SH2D1B/EAT2; SH2D1A and SH2D1B can associate with the same SLAMF6 molecule; interaction with SH2D1B is mediated by ITSM 2. Phosphorylation in NK cells upon engagment by SLAMF6-expressing target cells is leading to receptor activation. In terms of tissue distribution, expressed by all (resting and activated) natural killer cells (NK), T- and B-lymphocytes. Increased surface expression on T-cells of systemic lupus erythematosus (SLE) patients.

The protein localises to the cell membrane. In terms of biological role, self-ligand receptor of the signaling lymphocytic activation molecule (SLAM) family. SLAM receptors triggered by homo- or heterotypic cell-cell interactions are modulating the activation and differentiation of a wide variety of immune cells and thus are involved in the regulation and interconnection of both innate and adaptive immune response. Activities are controlled by presence or absence of small cytoplasmic adapter proteins, SH2D1A/SAP and/or SH2D1B/EAT-2. Triggers cytolytic activity only in natural killer cells (NK) expressing high surface densities of natural cytotoxicity receptors. Positive signaling in NK cells implicates phosphorylation of VAV1. NK cell activation seems to depend on SH2D1B and not on SH2D1A. In conjunction with SLAMF1 controls the transition between positive selection and the subsequent expansion and differentiation of the thymocytic natural killer T (NKT) cell lineage. Promotes T-cell differentiation into a helper T-cell Th17 phenotype leading to increased IL-17 secretion; the costimulatory activity requires SH2D1A. Promotes recruitment of RORC to the IL-17 promoter. In conjunction with SLAMF1 and CD84/SLAMF5 may be a negative regulator of the humoral immune response. In the absence of SH2D1A/SAP can transmit negative signals to CD4(+) T-cells and NKT cells. Negatively regulates germinal center formation by inhibiting T-cell:B-cell adhesion; the function probably implicates increased association with PTPN6/SHP-1 via ITSMs in absence of SH2D1A/SAP. However, reported to be involved in maintaining B-cell tolerance in germinal centers and in preventing autoimmunity. The protein is SLAM family member 6 (SLAMF6) of Homo sapiens (Human).